An 818-amino-acid chain; its full sequence is SIT4-associating protein SAP4 (818 aa).

Disordered stretches follow at residues 33–60 and 499–526; these read ETSS…RDRS and TSNT…KNIK. Over residues 509–518 the composition is skewed to low complexity; the sequence is NNDSNDSNDN.

Belongs to the SAPS family. Post-translationally, hyperphosphorylated in the absence of SIT4.

Its function is as follows. Associates with the SIT4 phosphatase in a cell cycle dependent manner. May be directly or indirectly involved in SIT4-dependent functions in budding and in normal G1 cyclin expression. This chain is SIT4-associating protein SAP4 (SAP4), found in Saccharomyces cerevisiae (strain ATCC 204508 / S288c) (Baker's yeast).